Reading from the N-terminus, the 415-residue chain is Multidrug resistance protein MdtA (415 aa).

An N-terminal signal peptide occupies residues 1–21 (MKGSYKSRWVIVIVVVIAAIA). Residues 31–47 (DSQSAAPGATKQAQQSP) are compositionally biased toward polar residues. Disordered stretches follow at residues 31-60 (DSQS…GPLA) and 392-415 (EAQS…GARS). The segment covering 399–415 (SEEKATSREYAKKGARS) has biased composition (basic and acidic residues).

Belongs to the membrane fusion protein (MFP) (TC 8.A.1) family. Part of a tripartite efflux system composed of MdtA, MdtB and MdtC.

It is found in the cell inner membrane. In terms of biological role, the MdtABC tripartite complex confers resistance against novobiocin and deoxycholate. The polypeptide is Multidrug resistance protein MdtA (Escherichia coli O139:H28 (strain E24377A / ETEC)).